The primary structure comprises 416 residues: Lipoyl synthase, mitochondrial (416 aa).

Residues 1–33 (MAAPTRSLRRLSSFRTTISPSLTVTAPIGCRSY) constitute a mitochondrion transit peptide. [4Fe-4S] cluster-binding residues include Cys132, Cys137, Cys143, Cys163, Cys167, Cys170, and Ser378. The Radical SAM core domain occupies 148 to 367 (DKSSATATIM…RQRALDMGFL (220 aa)). The segment at 396-416 (GSGTAERTVDQTAATTDEATR) is disordered. Residues 405–416 (DQTAATTDEATR) show a composition bias toward polar residues.

This sequence belongs to the radical SAM superfamily. Lipoyl synthase family. [4Fe-4S] cluster serves as cofactor.

It is found in the mitochondrion. The enzyme catalyses [[Fe-S] cluster scaffold protein carrying a second [4Fe-4S](2+) cluster] + N(6)-octanoyl-L-lysyl-[protein] + 2 oxidized [2Fe-2S]-[ferredoxin] + 2 S-adenosyl-L-methionine + 4 H(+) = [[Fe-S] cluster scaffold protein] + N(6)-[(R)-dihydrolipoyl]-L-lysyl-[protein] + 4 Fe(3+) + 2 hydrogen sulfide + 2 5'-deoxyadenosine + 2 L-methionine + 2 reduced [2Fe-2S]-[ferredoxin]. The protein operates within protein modification; protein lipoylation via endogenous pathway; protein N(6)-(lipoyl)lysine from octanoyl-[acyl-carrier-protein]: step 2/2. Functionally, catalyzes the radical-mediated insertion of two sulfur atoms into the C-6 and C-8 positions of the octanoyl moiety bound to the lipoyl domains of lipoate-dependent enzymes, thereby converting the octanoylated domains into lipoylated derivatives. This Penicillium rubens (strain ATCC 28089 / DSM 1075 / NRRL 1951 / Wisconsin 54-1255) (Penicillium chrysogenum) protein is Lipoyl synthase, mitochondrial.